Here is a 471-residue protein sequence, read N- to C-terminus: UTP--glucose-1-phosphate uridylyltransferase (471 aa).

UTP-binding positions include 87 to 90 (LNGG), K101, Q164, and G193. 89 to 90 (GG) contacts substrate. Substrate-binding positions include H194 and 222-224 (NSD). 2 residues coordinate UTP: D224 and K362.

Belongs to the UDPGP type 1 family.

It localises to the cytoplasm. The enzyme catalyses alpha-D-glucose 1-phosphate + UTP + H(+) = UDP-alpha-D-glucose + diphosphate. Functionally, plays a central role as a glucosyl donor in cellular metabolic pathways. The sequence is that of UTP--glucose-1-phosphate uridylyltransferase (UGP) from Astragalus penduliflorus (Mountain lentil).